The sequence spans 250 residues: Small ribosomal subunit protein uS2 (250 aa).

It belongs to the universal ribosomal protein uS2 family.

This Variovorax paradoxus (strain S110) protein is Small ribosomal subunit protein uS2.